Here is a 211-residue protein sequence, read N- to C-terminus: Redox-sensing transcriptional repressor Rex (211 aa).

A DNA-binding region (H-T-H motif) is located at residues 16 to 55 (LYYRYLLILNEEGKDKVSSTELSEAVQVDSASIRRDFSYF). An NAD(+)-binding site is contributed by 90–95 (GVGNLG).

Belongs to the transcriptional regulatory Rex family. In terms of assembly, homodimer.

The protein resides in the cytoplasm. In terms of biological role, modulates transcription in response to changes in cellular NADH/NAD(+) redox state. The sequence is that of Redox-sensing transcriptional repressor Rex from Lactobacillus acidophilus (strain ATCC 700396 / NCK56 / N2 / NCFM).